Reading from the N-terminus, the 309-residue chain is Foldase protein PrsA (309 aa).

The signal sequence occupies residues 1–22 (MKTRSKLAAGFLTLMSVATLAA). The N-palmitoyl cysteine moiety is linked to residue Cys23. Cys23 carries the S-diacylglycerol cysteine lipid modification. The region spanning 146 to 241 (TPETSVQVIK…TSYYIIKVTD (96 aa)) is the PpiC domain.

The protein belongs to the PrsA family.

The protein localises to the cell membrane. It carries out the reaction [protein]-peptidylproline (omega=180) = [protein]-peptidylproline (omega=0). Its function is as follows. Plays a major role in protein secretion by helping the post-translocational extracellular folding of several secreted proteins. The polypeptide is Foldase protein PrsA (Streptococcus agalactiae serotype III (strain NEM316)).